A 262-amino-acid polypeptide reads, in one-letter code: Octopine permease ATP-binding protein P (262 aa).

Positions 9-254 (VKLTGIRKNF…PRTERFRQFL (246 aa)) constitute an ABC transporter domain. 41–48 (GSSGSGKS) contacts ATP.

It belongs to the ABC transporter superfamily.

The protein resides in the cell inner membrane. Its function is as follows. Component of the octopine active transport system probably consisting of four subunits: Q, M, P and T. In Rhizobium meliloti (Ensifer meliloti), this protein is Octopine permease ATP-binding protein P (occP).